A 194-amino-acid chain; its full sequence is NADH-quinone oxidoreductase subunit B (194 aa).

Residues cysteine 73, cysteine 74, cysteine 138, and cysteine 168 each contribute to the [4Fe-4S] cluster site.

This sequence belongs to the complex I 20 kDa subunit family. NDH-1 is composed of 14 different subunits. Subunits NuoB, C, D, E, F, and G constitute the peripheral sector of the complex. [4Fe-4S] cluster serves as cofactor.

The protein localises to the cell inner membrane. The enzyme catalyses a quinone + NADH + 5 H(+)(in) = a quinol + NAD(+) + 4 H(+)(out). Functionally, NDH-1 shuttles electrons from NADH, via FMN and iron-sulfur (Fe-S) centers, to quinones in the respiratory chain. The immediate electron acceptor for the enzyme in this species is believed to be ubiquinone. Couples the redox reaction to proton translocation (for every two electrons transferred, four hydrogen ions are translocated across the cytoplasmic membrane), and thus conserves the redox energy in a proton gradient. The protein is NADH-quinone oxidoreductase subunit B of Bradyrhizobium sp. (strain BTAi1 / ATCC BAA-1182).